We begin with the raw amino-acid sequence, 158 residues long: UPF0178 protein Rpal_2485 (158 aa).

Belongs to the UPF0178 family.

The polypeptide is UPF0178 protein Rpal_2485 (Rhodopseudomonas palustris (strain TIE-1)).